A 375-amino-acid polypeptide reads, in one-letter code: Probable G-protein coupled receptor 34 (375 aa).

Residues 1–54 (MTTTSVDSWLCSSHGMHFITNYSDQASQNFSGVPNVTSCPMDEKLLSTVLTTFY) lie on the Extracellular side of the membrane. Residues Asn21, Asn29, and Asn35 are each glycosylated (N-linked (GlcNAc...) asparagine). A helical membrane pass occupies residues 55–75 (SVIFLVGLVGNIIALYVFLGI). Topologically, residues 76 to 81 (HRKRNS) are cytoplasmic. Residues 82 to 102 (IQIYLLNVAVADLLLIFCLPF) form a helical membrane-spanning segment. Residues 103–121 (RIMYHINQNKWTLGVILCK) are Extracellular-facing. A disulfide bond links Cys120 and Cys197. A helical membrane pass occupies residues 122–142 (VVGTLFYMNMYISIILLGFIS). Residues 143 to 164 (LDRYIKINRSIQQRRAITTKQS) lie on the Cytoplasmic side of the membrane. Residues 165 to 185 (IYVCCIVWTVALAGFLTMIIL) form a helical membrane-spanning segment. The Extracellular segment spans residues 186 to 209 (TLKKGGHNSTMCFHYRDRHNAKGE). An N-linked (GlcNAc...) asparagine glycan is attached at Asn193. The helical transmembrane segment at 210–230 (AIFNFVLVVMFWLIFLLIILS) threads the bilayer. Topologically, residues 231-262 (YIKIGKNLLRISKRRSKFPNSGKYATTARNSF) are cytoplasmic. Residues 263–283 (IVLIIFTICFVPYHAFRFIYI) traverse the membrane as a helical segment. The Extracellular portion of the chain corresponds to 284 to 303 (SSQLNVSSCYWKEIIHKTNE). N-linked (GlcNAc...) asparagine glycosylation is present at Asn288. The chain crosses the membrane as a helical span at residues 304-324 (IMLVFSSFNSCLDPVMYFLMS). Residues 325-375 (SNIRKIMCQLLFRRFQSEASRSESTSEFKPGHSLHDLSVTVKMPQYSTKGN) lie on the Cytoplasmic side of the membrane.

Belongs to the G-protein coupled receptor 1 family. Highly expressed in glial cells such as astrocytes and microglia.

The protein localises to the cell membrane. Its function is as follows. G-protein-coupled receptor of lysophosphatidylserine (LysoPS) that plays different roles in immune response. Acts a damage-sensing receptor that triggers tissue repair upon recognition of dying neutrophils. Mechanistically, apoptotic neutrophils release lysophosphatydilserine that are recognized by type 3 innate lymphoid cells (ILC3s) via GPR34, which activates downstream PI3K-AKT and RAS-ERK signaling pathways leading to STAT3 activation and IL-22 production. Plays an important role in microglial function, controlling morphology and phagocytosis. The polypeptide is Probable G-protein coupled receptor 34 (Gpr34) (Mus musculus (Mouse)).